The following is a 313-amino-acid chain: Protein YABBY 3 (313 aa).

The segment at 65 to 92 (CHYCDTVLVVSVPSSSLFETVTVRCGHC) adopts a C4-type zinc-finger fold. Disordered stretches follow at residues 107-149 (TTAA…SLLD) and 180-221 (NNSP…KRQR). Pro residues predominate over residues 112–128 (APPPPPPPPPPPPPPAA).

It belongs to the YABBY family. As to expression, expressed in shoot apex and young inflorescences.

The protein resides in the nucleus. This chain is Protein YABBY 3 (YAB3), found in Oryza sativa subsp. japonica (Rice).